Consider the following 323-residue polypeptide: MIRSVVRGFGAALPKRVMTNKEMESKVDTSDEWIVQRTGIRQRYIAGDGETTASLGEAAARAALERAGLTPDDIDLIIVATSTPDNTFPATAVNIQNRLGMRHGAAFDMQAVCSGFVYAVTTGDAYIRGGLATRVLVIGAETFSRILDWTDRTTCVLFGDGAGAIVLEAQEGAGTKADRGVLTAQLRSDGAHGDKLYVDGGPSTTGTVGHLRMEGREVFKHAVGMITDVIEAAFEATGTTADDIDWLVPHQANRRIIEGSAKKLGIPLEKVVVTVDLHGNTSAASIPLALDAAATDGRIKRGDLVMLEAMGGGFTWGSVLLRW.

Active-site residues include Cys113 and His250. The tract at residues Gln251–Arg255 is ACP-binding. The active site involves Asn280.

Belongs to the thiolase-like superfamily. FabH family. In terms of assembly, homodimer.

The protein localises to the cytoplasm. It catalyses the reaction malonyl-[ACP] + acetyl-CoA + H(+) = 3-oxobutanoyl-[ACP] + CO2 + CoA. It functions in the pathway lipid metabolism; fatty acid biosynthesis. Catalyzes the condensation reaction of fatty acid synthesis by the addition to an acyl acceptor of two carbons from malonyl-ACP. Catalyzes the first condensation reaction which initiates fatty acid synthesis and may therefore play a role in governing the total rate of fatty acid production. Possesses both acetoacetyl-ACP synthase and acetyl transacylase activities. Its substrate specificity determines the biosynthesis of branched-chain and/or straight-chain of fatty acids. This is Beta-ketoacyl-[acyl-carrier-protein] synthase III from Sinorhizobium medicae (strain WSM419) (Ensifer medicae).